Here is a 100-residue protein sequence, read N- to C-terminus: Integration host factor subunit alpha (100 aa).

The protein belongs to the bacterial histone-like protein family. In terms of assembly, heterodimer of an alpha and a beta chain.

Functionally, this protein is one of the two subunits of integration host factor, a specific DNA-binding protein that functions in genetic recombination as well as in transcriptional and translational control. The sequence is that of Integration host factor subunit alpha from Phenylobacterium zucineum (strain HLK1).